The sequence spans 238 residues: Phosphoribosylaminoimidazole-succinocarboxamide synthase (238 aa).

Belongs to the SAICAR synthetase family.

The catalysed reaction is 5-amino-1-(5-phospho-D-ribosyl)imidazole-4-carboxylate + L-aspartate + ATP = (2S)-2-[5-amino-1-(5-phospho-beta-D-ribosyl)imidazole-4-carboxamido]succinate + ADP + phosphate + 2 H(+). The protein operates within purine metabolism; IMP biosynthesis via de novo pathway; 5-amino-1-(5-phospho-D-ribosyl)imidazole-4-carboxamide from 5-amino-1-(5-phospho-D-ribosyl)imidazole-4-carboxylate: step 1/2. In Desulfitobacterium hafniense (strain Y51), this protein is Phosphoribosylaminoimidazole-succinocarboxamide synthase.